The following is a 167-amino-acid chain: MKTNCEFPLLCLLIVLVANVEGEVEDTGLKMVKRLWRNWEDPEQRQLLDQEAEQEKQLEKRLWRNWEDLELRQLLNEFAENQREKRLWRNWERRQVAKEDDGEKPKELWRNWEDLKRRQVVDLNDEQKTQRDKRLWRNWEDNHATLRKRSADSLSRQKRLGRERGKE.

Residues 1–22 (MKTNCEFPLLCLLIVLVANVEG) form the signal peptide. Residues 23–94 (EVEDTGLKMV…KRLWRNWERR (72 aa)) constitute a propeptide that is removed on maturation. 3 RLWRNWE repeats span residues 34–40 (RLWRNWE), 61–67 (RLWRNWE), and 86–92 (RLWRNWE). Q95 is subject to Pyrrolidone carboxylic acid. One copy of the RLWRNWE 4; approximate repeat lies at 107–113 (ELWRNWE). Positions 112–118 (WEDLKRR) are excised as a propeptide. Q119 bears the Pyrrolidone carboxylic acid mark. The stretch at 134-140 (RLWRNWE) is one RLWRNWE 5 repeat. A propeptide spanning residues 139-167 (WEDNHATLRKRSADSLSRQKRLGRERGKE) is cleaved from the precursor. The disordered stretch occupies residues 147-167 (RKRSADSLSRQKRLGRERGKE).

Belongs to the scoloptoxin-08 family. Expressed by the venom gland.

The protein localises to the secreted. The polypeptide is U-scoloptoxin-Er5c (Ethmostigmus rubripes (Giant centipede)).